The primary structure comprises 248 residues: Probable transcriptional regulatory protein NGR_c27950 (248 aa).

The protein belongs to the TACO1 family.

Its subcellular location is the cytoplasm. This is Probable transcriptional regulatory protein NGR_c27950 from Sinorhizobium fredii (strain NBRC 101917 / NGR234).